The primary structure comprises 577 residues: Proline--tRNA ligase (577 aa).

This sequence belongs to the class-II aminoacyl-tRNA synthetase family. ProS type 1 subfamily. As to quaternary structure, homodimer.

The protein localises to the cytoplasm. The catalysed reaction is tRNA(Pro) + L-proline + ATP = L-prolyl-tRNA(Pro) + AMP + diphosphate. Catalyzes the attachment of proline to tRNA(Pro) in a two-step reaction: proline is first activated by ATP to form Pro-AMP and then transferred to the acceptor end of tRNA(Pro). As ProRS can inadvertently accommodate and process non-cognate amino acids such as alanine and cysteine, to avoid such errors it has two additional distinct editing activities against alanine. One activity is designated as 'pretransfer' editing and involves the tRNA(Pro)-independent hydrolysis of activated Ala-AMP. The other activity is designated 'posttransfer' editing and involves deacylation of mischarged Ala-tRNA(Pro). The misacylated Cys-tRNA(Pro) is not edited by ProRS. The polypeptide is Proline--tRNA ligase (Helicobacter pylori (strain Shi470)).